The chain runs to 378 residues: tRNA-specific 2-thiouridylase MnmA (378 aa).

Residues 9 to 16 (GVSGGVDS) and methionine 35 each bind ATP. Residues 94–96 (NPD) form an interaction with target base in tRNA region. Cysteine 99 (nucleophile) is an active-site residue. Cysteine 99 and cysteine 195 are disulfide-bonded. Glycine 123 serves as a coordination point for ATP. Residues 145–147 (KDQ) are interaction with tRNA. Cysteine 195 functions as the Cysteine persulfide intermediate in the catalytic mechanism. Positions 307-308 (RY) are interaction with tRNA.

This sequence belongs to the MnmA/TRMU family.

Its subcellular location is the cytoplasm. The enzyme catalyses S-sulfanyl-L-cysteinyl-[protein] + uridine(34) in tRNA + AH2 + ATP = 2-thiouridine(34) in tRNA + L-cysteinyl-[protein] + A + AMP + diphosphate + H(+). Catalyzes the 2-thiolation of uridine at the wobble position (U34) of tRNA, leading to the formation of s(2)U34. The chain is tRNA-specific 2-thiouridylase MnmA from Xanthomonas oryzae pv. oryzae (strain MAFF 311018).